A 378-amino-acid chain; its full sequence is UDP-N-acetylglucosamine--N-acetylmuramyl-(pentapeptide) pyrophosphoryl-undecaprenol N-acetylglucosamine transferase (378 aa).

Residues 13–15 (TGG), Asn124, Arg165, Ser193, and Gln294 contribute to the UDP-N-acetyl-alpha-D-glucosamine site.

It belongs to the glycosyltransferase 28 family. MurG subfamily.

The protein resides in the cell inner membrane. The enzyme catalyses di-trans,octa-cis-undecaprenyl diphospho-N-acetyl-alpha-D-muramoyl-L-alanyl-D-glutamyl-meso-2,6-diaminopimeloyl-D-alanyl-D-alanine + UDP-N-acetyl-alpha-D-glucosamine = di-trans,octa-cis-undecaprenyl diphospho-[N-acetyl-alpha-D-glucosaminyl-(1-&gt;4)]-N-acetyl-alpha-D-muramoyl-L-alanyl-D-glutamyl-meso-2,6-diaminopimeloyl-D-alanyl-D-alanine + UDP + H(+). The protein operates within cell wall biogenesis; peptidoglycan biosynthesis. Its function is as follows. Cell wall formation. Catalyzes the transfer of a GlcNAc subunit on undecaprenyl-pyrophosphoryl-MurNAc-pentapeptide (lipid intermediate I) to form undecaprenyl-pyrophosphoryl-MurNAc-(pentapeptide)GlcNAc (lipid intermediate II). The sequence is that of UDP-N-acetylglucosamine--N-acetylmuramyl-(pentapeptide) pyrophosphoryl-undecaprenol N-acetylglucosamine transferase from Agrobacterium fabrum (strain C58 / ATCC 33970) (Agrobacterium tumefaciens (strain C58)).